The chain runs to 505 residues: 2,3-bisphosphoglycerate-independent phosphoglycerate mutase (505 aa).

Residues Asp-11 and Ser-61 each contribute to the Mn(2+) site. Ser-61 functions as the Phosphoserine intermediate in the catalytic mechanism. Residues His-122, 152-153 (RD), Arg-184, Arg-190, 258-261 (RPDR), and Lys-331 contribute to the substrate site. 5 residues coordinate Mn(2+): Asp-396, His-400, Asp-437, His-438, and His-455.

This sequence belongs to the BPG-independent phosphoglycerate mutase family. Monomer. Requires Mn(2+) as cofactor.

It catalyses the reaction (2R)-2-phosphoglycerate = (2R)-3-phosphoglycerate. The protein operates within carbohydrate degradation; glycolysis; pyruvate from D-glyceraldehyde 3-phosphate: step 3/5. Its function is as follows. Catalyzes the interconversion of 2-phosphoglycerate and 3-phosphoglycerate. This is 2,3-bisphosphoglycerate-independent phosphoglycerate mutase from Mesomycoplasma hyopneumoniae (strain J / ATCC 25934 / NCTC 10110) (Mycoplasma hyopneumoniae).